We begin with the raw amino-acid sequence, 1005 residues long: Non-structural polyprotein 1A (1005 aa).

Helical transmembrane passes span 239-259, 286-306, 313-333, and 344-364; these read PDGAFDKESLALECSKQMDYM, DEIVTAIRTVVRFAMDFSLAY, VLILTRNKKHAIISACCALVA, and TLVLTYAPSETAIAGCIYGLG. Active-site charge relay system; for serine protease activity residues include His524, Asp556, and Ser621. Tyr753 is modified (O-(5'-phospho-RNA)-tyrosine). Residues 940–984 form a disordered region; that stretch reads PVIQQVEQQPQVEQQQQPQQPVVEEKKRTPPPKPQRKPKTGAKAK. Low complexity predominate over residues 941–961; sequence VIQQVEQQPQVEQQQQPQQPV.

It belongs to the astroviridae polyprotein 1A family. As to quaternary structure, monomer. Cleaved by the viral and host proteases. The protease is probably autocatalytically cleaved.

It is found in the host membrane. It carries out the reaction RNA(n) + a ribonucleoside 5'-triphosphate = RNA(n+1) + diphosphate. Responsible for the cleavage of the polyprotein into functional products. Functionally, protein covalently attached to the 5' extremity of the genomic and subgenomic RNAs. It may serve as a primer for the replicase. The chain is Non-structural polyprotein 1A (ORF1) from Avian nephritis virus 1 (ANV-1).